The primary structure comprises 163 residues: Probable metallophosphoesterase MG207 (163 aa).

7 residues coordinate Mn(2+): D9, H11, D34, N53, H75, H107, and H109.

The protein belongs to the metallophosphoesterase superfamily. YfcE family. It depends on Mn(2+) as a cofactor.

The chain is Probable metallophosphoesterase MG207 from Mycoplasma genitalium (strain ATCC 33530 / DSM 19775 / NCTC 10195 / G37) (Mycoplasmoides genitalium).